Reading from the N-terminus, the 481-residue chain is Proline--tRNA ligase (481 aa).

It belongs to the class-II aminoacyl-tRNA synthetase family. ProS type 3 subfamily. As to quaternary structure, homodimer.

The protein localises to the cytoplasm. It carries out the reaction tRNA(Pro) + L-proline + ATP = L-prolyl-tRNA(Pro) + AMP + diphosphate. Its function is as follows. Catalyzes the attachment of proline to tRNA(Pro) in a two-step reaction: proline is first activated by ATP to form Pro-AMP and then transferred to the acceptor end of tRNA(Pro). This Saccharolobus islandicus (strain M.16.27) (Sulfolobus islandicus) protein is Proline--tRNA ligase.